The chain runs to 384 residues: N-acetylneuraminate epimerase (384 aa).

Residues 1–29 (MGMQMKNFKKMMTLMALCLSVAITTSGYA) form the signal peptide. 7 Kelch repeats span residues 51–95 (VIYV…VFLN), 97–149 (ELYV…VKLN), 151–184 (TMVL…KVIY), 185–230 (NYFN…VMEN), 233–282 (LMLI…LAGA), 304–353 (QNYT…SYGD), and 355–384 (VFLI…LLIK). Glu239 serves as the catalytic Proton acceptor.

This sequence belongs to the NanM family. As to quaternary structure, homodimer.

It localises to the periplasm. The catalysed reaction is N-acetyl-alpha-neuraminate = N-acetyl-beta-neuraminate. In terms of biological role, converts alpha-N-acetylneuranimic acid (Neu5Ac) to the beta-anomer, accelerating the equilibrium between the alpha- and beta-anomers. Probably facilitates sialidase-negative bacteria to compete successfully for limited amounts of extracellular Neu5Ac, which is likely taken up in the beta-anomer. In addition, the rapid removal of sialic acid from solution might be advantageous to the bacterium to damp down host responses. This is N-acetylneuraminate epimerase from Salmonella enteritidis PT4 (strain P125109).